A 1513-amino-acid polypeptide reads, in one-letter code: DNA polymerase alpha catalytic subunit (1513 aa).

A disordered region spans residues 235–254; the sequence is STNQNANASDSKRVSNQTND. Residues Cys1344, Cys1347, Cys1370, Cys1373, Cys1404, Cys1409, Cys1422, and Cys1427 each coordinate Zn(2+). The segment at 1344–1373 adopts a CysA-type zinc-finger fold; sequence CPHCSESYHFPGIFQDGKNNTLSGLLCIKC. Residues 1404 to 1427 carry the CysB motif motif; sequence CQEPACGAVSRQLLYNNKCINLAC.

It belongs to the DNA polymerase type-B family.

The protein localises to the nucleus. The enzyme catalyses DNA(n) + a 2'-deoxyribonucleoside 5'-triphosphate = DNA(n+1) + diphosphate. Polymerase alpha in a complex with DNA primase is a replicative polymerase. In Oxytricha trifallax (Sterkiella histriomuscorum), this protein is DNA polymerase alpha catalytic subunit.